The following is a 127-amino-acid chain: Major sperm protein 55/57 (127 aa).

The residue at position 2 (A2) is an N-acetylalanine. Residues 9-126 (DIQTQPGTKI…RRKNLPIEYN (118 aa)) enclose the MSP domain.

Sperm.

The protein resides in the cell projection. The protein localises to the pseudopodium. It is found in the cytoplasm. It localises to the cytoskeleton. Central component in molecular interactions underlying sperm crawling. Forms an extensive filament system that extends from sperm villipoda, along the leading edge of the pseudopod. This Caenorhabditis elegans protein is Major sperm protein 55/57 (msp-55).